The primary structure comprises 416 residues: MSINWLTHPFEELSNLKHSLDETLKNWTEPAPTAATSMDWGWKPRMDVCENKDYYKIILELPSFNKDEIEVQVNGRFLSIKGQKIEHTTDEWKYHRRERYSGGEFHRAVALPEGIDGSSIQAKFQSGVLLLLIPKTGGKTSQHISLFGREEHGNKRNVIDLEEKERKRRMEESDPMLGRRWGTGRSLFSGSKLNNQNDTMYRKPSASDLRLVKQMETKERERRIRDTKGETEKKKNALKVSRYIKSLGMNPRSTLRRGGREMEKIIHLEERERQARIRDKGRMRQQQALAKKVSNLIKHSGGAARLRHTGFNYSTITKGYNTNKTKFDRFGKENDSFGGFNINKSFTNQFKGFGKNSGGKSINITTGGFKAPSQFNKFTHNLEEKERQRRLNDKKGQNDAKRLAAEISHMIGNAHF.

Positions Ser-37–Glu-150 constitute a sHSP domain. A disordered region spans residues Glu-216–Lys-235.

This sequence belongs to the small heat shock protein (HSP20) family.

This is Heat shock protein DDB_G0280215 from Dictyostelium discoideum (Social amoeba).